The chain runs to 302 residues: Sulfate adenylyltransferase subunit 2 (302 aa).

A disordered region spans residues 280–302 (RQGRLIDSDQSASMEQKKRQGYF).

It belongs to the PAPS reductase family. CysD subfamily. As to quaternary structure, heterodimer composed of CysD, the smaller subunit, and CysN.

The catalysed reaction is sulfate + ATP + H(+) = adenosine 5'-phosphosulfate + diphosphate. Its pathway is sulfur metabolism; hydrogen sulfide biosynthesis; sulfite from sulfate: step 1/3. In terms of biological role, with CysN forms the ATP sulfurylase (ATPS) that catalyzes the adenylation of sulfate producing adenosine 5'-phosphosulfate (APS) and diphosphate, the first enzymatic step in sulfur assimilation pathway. APS synthesis involves the formation of a high-energy phosphoric-sulfuric acid anhydride bond driven by GTP hydrolysis by CysN coupled to ATP hydrolysis by CysD. The sequence is that of Sulfate adenylyltransferase subunit 2 from Shewanella sp. (strain ANA-3).